The following is a 179-amino-acid chain: Ribosome maturation factor RimM (179 aa).

One can recognise a PRC barrel domain in the interval 95-174 (KDEFFYFDIL…QIFCTQDAFL (80 aa)).

Belongs to the RimM family. As to quaternary structure, binds ribosomal protein uS19.

The protein resides in the cytoplasm. An accessory protein needed during the final step in the assembly of 30S ribosomal subunit, possibly for assembly of the head region. Essential for efficient processing of 16S rRNA. May be needed both before and after RbfA during the maturation of 16S rRNA. It has affinity for free ribosomal 30S subunits but not for 70S ribosomes. This is Ribosome maturation factor RimM from Campylobacter jejuni subsp. jejuni serotype O:6 (strain 81116 / NCTC 11828).